The primary structure comprises 348 residues: D-lactate dehydrogenase kk1H (348 aa).

NAD(+) is bound by residues 158-159, aspartate 178, 208-209, 235-237, and aspartate 261; these read RI, CP, and TSR. Arginine 237 is a catalytic residue. Glutamate 266 is an active-site residue. Histidine 298 acts as the Proton donor in catalysis.

It belongs to the D-isomer specific 2-hydroxyacid dehydrogenase family.

Its pathway is secondary metabolite biosynthesis. In terms of biological role, D-lactate dehydrogenase; part of the gene cluster that mediates the biosynthesis of KK-1, a novel cyclic depsipeptide with 10 residues which is a promising active compound with high activity against many plant pathogens, especially Botrytis cinerea. Within the pathway, kk1H catalyzes in the synthesis of D-lactic acid from pyruvic acid, which is recognized by the A domain of the first kk1B module. The nonribosomal peptide synthetase (NRPS) kk1B catalyzes the elongation and cyclization of the decapeptide chain composed of 1 D-lactic acid residue (D-Lac), 1 pipecolic acid residue (Pip), 1 aspartic acid residue (Asp), 1 isoleucine residue (Ile), 1 glycine residue (Gly), 1 tyrosine residue (Tyr) and 4 valine residues (Val). The Asp, Ile and 3 Val residues are N-methylated by the 5 methyltransferase domains from the NRPS (found in modules 3, 5, 6, 7 and 9), whereas the Tyr residue is O-methylated by the cluster encoded O-methyltransferase kk1A. The thioesterase kk1J is likely to be involved in the corrective mechanism of peptide chain synthesis. The D-lactate dehydrogenase kk1H is involved in the synthesis of D-lactic acid from pyruvic acid, which is recognized by the A domain of the first kk1B module. The pyrroline-5-carboxylate reductase kk1I is involved in the synthesis of the L-pipecolic acid residue of KK-1 from delta-1-pyrroline-5-carboxylate (P5C), a metabolic intermediate of lysine. It still is unclear how kk1C and kk1D are involved in the production of KK-1. The polypeptide is D-lactate dehydrogenase kk1H (Curvularia clavata).